A 195-amino-acid polypeptide reads, in one-letter code: 2-amino-4-hydroxy-6-hydroxymethyldihydropteridine pyrophosphokinase (195 aa).

The protein belongs to the HPPK family.

It carries out the reaction 6-hydroxymethyl-7,8-dihydropterin + ATP = (7,8-dihydropterin-6-yl)methyl diphosphate + AMP + H(+). It functions in the pathway cofactor biosynthesis; tetrahydrofolate biosynthesis; 2-amino-4-hydroxy-6-hydroxymethyl-7,8-dihydropteridine diphosphate from 7,8-dihydroneopterin triphosphate: step 4/4. Its function is as follows. Catalyzes the transfer of pyrophosphate from adenosine triphosphate (ATP) to 6-hydroxymethyl-7,8-dihydropterin, an enzymatic step in folate biosynthesis pathway. The sequence is that of 2-amino-4-hydroxy-6-hydroxymethyldihydropteridine pyrophosphokinase (folK) from Synechocystis sp. (strain ATCC 27184 / PCC 6803 / Kazusa).